The sequence spans 538 residues: Tetracenomycin C resistance and export protein (538 aa).

The next 14 helical transmembrane spans lie at 28-48 (LLAVAVGVMMVALDSTIVAIA), 65-85 (WITNGYLLALAVSLITAGKLG), 100-120 (GFAVTSAAIGLSGSVAAIVVF), 126-146 (LFGALMQPSALGLLRVTFPPG), 154-174 (IWSGVVGASTAAGPIIGGLLV), 181-201 (AVFFINVPVGLAALVAGLVIL), 213-233 (FDVSGIVLLSGAMFCLVWGLI), 239-259 (GWGDLRTLGFLAAAVLAFAGF), 286-306 (VLMVLMAFSFIGGLFFVTFYL), 319-339 (VHLLPLTGMMIVGAPVSGIVI), 342-362 (FGPGGPLVVGMLLTAASLWGM), 371-391 (MGITSLWFVLLGLGLAPVMVG), 413-433 (QSAMQVGGSLGTAVLGVLMAS), and 494-514 (MGLAFTVAGAVALVAAAVALF).

The protein belongs to the major facilitator superfamily. EmrB family.

The protein localises to the cell membrane. It participates in antibiotic biosynthesis; tetracenomycin C biosynthesis. In terms of biological role, resistance to tetracenomycin C by an active tetracenomycin C efflux system which is probably energized by transmembrane electrochemical gradients. The chain is Tetracenomycin C resistance and export protein (tcmA) from Streptomyces glaucescens.